The chain runs to 1828 residues: Unconventional myosin-Va (1828 aa).

At A2 the chain carries N-acetylalanine. One can recognise a Myosin N-terminal SH3-like domain in the interval T8–P60. Residues V69–A763 enclose the Myosin motor domain. Residue G163–T170 participates in ATP binding. A disordered region spans residues I599–K633. S600 carries the phosphoserine modification. Positions S600–T610 are enriched in polar residues. The actin-binding stretch occupies residues L643–D665. IQ domains lie at L766–C788, M789–R813, R814–I836, R837–L861, R862–R884, and T885–S914. Coiled-coil stretches lie at residues S914 to A1239 and G1314 to V1418. A Phosphothreonine modification is found at T1032. A disordered region spans residues V1105–K1147. A compositionally biased stretch (polar residues) spans T1116 to F1130. The segment covering I1136–K1147 has biased composition (basic and acidic residues). Residues S1425 and S1625 each carry the phosphoserine modification. The Dilute domain maps to T1507–D1783. Phosphothreonine is present on T1733.

The protein belongs to the TRAFAC class myosin-kinesin ATPase superfamily. Myosin family. As to quaternary structure, may be a homodimer, which associates with multiple calmodulin or myosin light chains. Interacts with RIPL2, the interaction is required for its role in dendrite formation. Interacts with MLPH. Interacts with SYTL4. Interacts with MYRIP. Interacts with RAB10; mediates the transport to the plasma membrane of SLC2A4/GLUT4 storage vesicles. Interacts with FMR1; this interaction occurs in association with polyribosome.

It catalyses the reaction ATP + H2O = ADP + phosphate + H(+). In terms of biological role, processive actin-based motor that can move in large steps approximating the 36-nm pseudo-repeat of the actin filament. Can hydrolyze ATP in the presence of actin, which is essential for its function as a motor protein. Involved in melanosome transport. Also mediates the transport of vesicles to the plasma membrane. May also be required for some polarization process involved in dendrite formation. This chain is Unconventional myosin-Va (Myo5a), found in Rattus norvegicus (Rat).